Here is a 391-residue protein sequence, read N- to C-terminus: Processive diacylglycerol beta-glucosyltransferase (391 aa).

This sequence belongs to the glycosyltransferase 28 family. UgtP subfamily.

It localises to the cell membrane. It catalyses the reaction a 1,2-diacyl-3-O-(beta-D-glucopyranosyl)-sn-glycerol + UDP-alpha-D-glucose = a 1,2-diacyl-3-O-(beta-D-Glc-(1-&gt;6)-beta-D-Glc)-sn-glycerol + UDP + H(+). The catalysed reaction is a 1,2-diacyl-sn-glycerol + UDP-alpha-D-glucose = a 1,2-diacyl-3-O-(beta-D-glucopyranosyl)-sn-glycerol + UDP + H(+). The protein operates within glycolipid metabolism; diglucosyl-diacylglycerol biosynthesis. Functionally, processive glucosyltransferase involved in the biosynthesis of both the bilayer- and non-bilayer-forming membrane glucolipids. Is able to successively transfer two glucosyl residues to diacylglycerol (DAG), thereby catalyzing the formation of beta-monoglucosyl-DAG (3-O-(beta-D-glucopyranosyl)-1,2-diacyl-sn-glycerol) and beta-diglucosyl-DAG (3-O-(beta-D-glucopyranosyl-beta-(1-&gt;6)-D-glucopyranosyl)-1,2-diacyl-sn-glycerol). Beta-diglucosyl-DAG is the predominant glycolipid found in Bacillales and is also used as a membrane anchor for lipoteichoic acid (LTA). The polypeptide is Processive diacylglycerol beta-glucosyltransferase (Staphylococcus carnosus (strain TM300)).